The sequence spans 307 residues: Aspartate carbamoyltransferase catalytic subunit (307 aa).

2 residues coordinate carbamoyl phosphate: arginine 59 and threonine 60. Residue lysine 87 participates in L-aspartate binding. Carbamoyl phosphate is bound by residues arginine 109, histidine 137, and glutamine 140. Residues arginine 173 and arginine 223 each coordinate L-aspartate. Residues glycine 266 and proline 267 each coordinate carbamoyl phosphate.

Belongs to the aspartate/ornithine carbamoyltransferase superfamily. ATCase family. As to quaternary structure, heterododecamer (2C3:3R2) of six catalytic PyrB chains organized as two trimers (C3), and six regulatory PyrI chains organized as three dimers (R2).

The enzyme catalyses carbamoyl phosphate + L-aspartate = N-carbamoyl-L-aspartate + phosphate + H(+). The protein operates within pyrimidine metabolism; UMP biosynthesis via de novo pathway; (S)-dihydroorotate from bicarbonate: step 2/3. Catalyzes the condensation of carbamoyl phosphate and aspartate to form carbamoyl aspartate and inorganic phosphate, the committed step in the de novo pyrimidine nucleotide biosynthesis pathway. The sequence is that of Aspartate carbamoyltransferase catalytic subunit from Helicobacter pylori (strain ATCC 700392 / 26695) (Campylobacter pylori).